An 878-amino-acid chain; its full sequence is DNA gyrase subunit A (878 aa).

The Topo IIA-type catalytic domain occupies L34–L533. The active-site O-(5'-phospho-DNA)-tyrosine intermediate is the Y122. Positions Q560–G566 match the GyrA-box motif. The segment at D844–E878 is disordered. Acidic residues predominate over residues E857–E878.

The protein belongs to the type II topoisomerase GyrA/ParC subunit family. As to quaternary structure, heterotetramer, composed of two GyrA and two GyrB chains. In the heterotetramer, GyrA contains the active site tyrosine that forms a transient covalent intermediate with DNA, while GyrB binds cofactors and catalyzes ATP hydrolysis.

Its subcellular location is the cytoplasm. It carries out the reaction ATP-dependent breakage, passage and rejoining of double-stranded DNA.. A type II topoisomerase that negatively supercoils closed circular double-stranded (ds) DNA in an ATP-dependent manner to modulate DNA topology and maintain chromosomes in an underwound state, and also catalyzes the interconversion of other topological isomers of double-stranded DNA rings, including catenanes and knotted rings. Replenishes negative supercoiling downstream of highly transcribed genes to help control overall chromosomal supercoiling density. E.coli makes 15% more negative supercoils in pBR322 plasmid DNA than S.typhimurium; the S.typhimurium GyrB subunit is toxic in E.coli, while the E.coli copy can be expressed in S.typhimurium even though the 2 subunits have 777/804 residues identical. Functionally, negative supercoiling favors strand separation, and DNA replication, transcription, recombination and repair, all of which involve strand separation. Type II topoisomerases break and join 2 DNA strands simultaneously in an ATP-dependent manner. The polypeptide is DNA gyrase subunit A (Salmonella typhimurium (strain LT2 / SGSC1412 / ATCC 700720)).